The chain runs to 839 residues: LPS-assembly protein LptD (839 aa).

Positions 1–21 are cleaved as a signal peptide; that stretch reads MAIGITACVLSLINYQGLAYS.

It belongs to the LptD family. In terms of assembly, component of the lipopolysaccharide transport and assembly complex. Interacts with LptE and LptA.

It localises to the cell outer membrane. Its function is as follows. Together with LptE, is involved in the assembly of lipopolysaccharide (LPS) at the surface of the outer membrane. This chain is LPS-assembly protein LptD, found in Legionella pneumophila subsp. pneumophila (strain Philadelphia 1 / ATCC 33152 / DSM 7513).